The chain runs to 203 residues: LexA repressor (203 aa).

The segment at residues isoleucine 28–lysine 47 is a DNA-binding region (H-T-H motif). Residues serine 127 and lysine 164 each act as for autocatalytic cleavage activity in the active site.

It belongs to the peptidase S24 family. Homodimer.

It catalyses the reaction Hydrolysis of Ala-|-Gly bond in repressor LexA.. Functionally, represses a number of genes involved in the response to DNA damage (SOS response), including recA and lexA. In the presence of single-stranded DNA, RecA interacts with LexA causing an autocatalytic cleavage which disrupts the DNA-binding part of LexA, leading to derepression of the SOS regulon and eventually DNA repair. The chain is LexA repressor from Leptospira interrogans serogroup Icterohaemorrhagiae serovar copenhageni (strain Fiocruz L1-130).